A 323-amino-acid chain; its full sequence is Phospho-N-acetylmuramoyl-pentapeptide-transferase (323 aa).

Helical transmembrane passes span 12–32 (IVMAIVISFIVASILGPIIIP), 58–78 (PTIGGLIFIFATIITMFVMVG), 84–104 (AMIALYSFVGFGFVGFLDDLL), 120–140 (MILLLIISGFLTWYAYKYIGT), 151–171 (INLGLFYIPAAMFYFAGVTNA), 177–197 (GLDGLATSVTVLVTTFLGIIS), 200–220 (LGHISLAIFCVALAGALLAFL), 229–250 (VFMGDTGSLALGGAVAMVALIL), and 303–323 (KIVSVFSIITVVFCFIAFASL).

This sequence belongs to the glycosyltransferase 4 family. MraY subfamily. Requires Mg(2+) as cofactor.

The protein localises to the cell membrane. It carries out the reaction UDP-N-acetyl-alpha-D-muramoyl-L-alanyl-gamma-D-glutamyl-meso-2,6-diaminopimeloyl-D-alanyl-D-alanine + di-trans,octa-cis-undecaprenyl phosphate = di-trans,octa-cis-undecaprenyl diphospho-N-acetyl-alpha-D-muramoyl-L-alanyl-D-glutamyl-meso-2,6-diaminopimeloyl-D-alanyl-D-alanine + UMP. The protein operates within cell wall biogenesis; peptidoglycan biosynthesis. Catalyzes the initial step of the lipid cycle reactions in the biosynthesis of the cell wall peptidoglycan: transfers peptidoglycan precursor phospho-MurNAc-pentapeptide from UDP-MurNAc-pentapeptide onto the lipid carrier undecaprenyl phosphate, yielding undecaprenyl-pyrophosphoryl-MurNAc-pentapeptide, known as lipid I. This is Phospho-N-acetylmuramoyl-pentapeptide-transferase from Clostridium perfringens (strain SM101 / Type A).